The primary structure comprises 225 residues: Probable CDP-diacylglycerol--inositol 3-phosphatidyltransferase 2 (225 aa).

Transmembrane regions (helical) follow at residues 6-26 and 29-49; these read PATLSVYLYIPNIVGYMRVLL and IAFSVCFSNKTLFSLLYFFSF. Aspartate 52 and aspartate 55 together coordinate Mg(2+). 3 residues coordinate a CDP-1,2-diacyl-sn-glycerol: glycine 56, arginine 60, and serine 66. 2 residues coordinate Mg(2+): aspartate 73 and aspartate 77. Aspartate 77 acts as the Proton acceptor in catalysis. 3 helical membrane-spanning segments follow: residues 84 to 104, 143 to 163, and 184 to 204; these read LLVILSQIYRPSLVFLSLLAL, MFMGYCCVSCEVLYIILLLIA, and LSLLLALSIFGWSIKQIINVI.

This sequence belongs to the CDP-alcohol phosphatidyltransferase class-I family. Requires Mg(2+) as cofactor. The cofactor is Mn(2+).

The protein localises to the membrane. The catalysed reaction is a CDP-1,2-diacyl-sn-glycerol + myo-inositol = a 1,2-diacyl-sn-glycero-3-phospho-(1D-myo-inositol) + CMP + H(+). Its function is as follows. Catalyzes the biosynthesis of phosphatidylinositol (PtdIns) as well as PtdIns:inositol exchange reaction. May thus act to reduce an excessive cellular PtdIns content. The exchange activity is due to the reverse reaction of PtdIns synthase and is dependent on CMP, which is tightly bound to the enzyme. This chain is Probable CDP-diacylglycerol--inositol 3-phosphatidyltransferase 2 (PIS2), found in Arabidopsis thaliana (Mouse-ear cress).